A 340-amino-acid chain; its full sequence is Phosphate acyltransferase (340 aa).

The protein belongs to the PlsX family. In terms of assembly, homodimer. Probably interacts with PlsY.

It localises to the cytoplasm. The enzyme catalyses a fatty acyl-[ACP] + phosphate = an acyl phosphate + holo-[ACP]. The protein operates within lipid metabolism; phospholipid metabolism. Catalyzes the reversible formation of acyl-phosphate (acyl-PO(4)) from acyl-[acyl-carrier-protein] (acyl-ACP). This enzyme utilizes acyl-ACP as fatty acyl donor, but not acyl-CoA. This chain is Phosphate acyltransferase, found in Marinobacter nauticus (strain ATCC 700491 / DSM 11845 / VT8) (Marinobacter aquaeolei).